A 364-amino-acid polypeptide reads, in one-letter code: Ribosomal RNA large subunit methyltransferase F (364 aa).

The span at 1–17 shows a compositional bias: low complexity; the sequence is MPKPAIKTAAKPATSSA. A disordered region spans residues 1–53; the sequence is MPKPAIKTAAKPATSSAGKRGKPITPKSVAKPQAAKPKTVSKPKVKPGEKKRL. A compositionally biased stretch (basic residues) spans 39–53; that stretch reads TVSKPKVKPGEKKRL.

Belongs to the methyltransferase superfamily. METTL16/RlmF family.

It localises to the cytoplasm. The catalysed reaction is adenosine(1618) in 23S rRNA + S-adenosyl-L-methionine = N(6)-methyladenosine(1618) in 23S rRNA + S-adenosyl-L-homocysteine + H(+). In terms of biological role, specifically methylates the adenine in position 1618 of 23S rRNA. This Shewanella sp. (strain MR-4) protein is Ribosomal RNA large subunit methyltransferase F.